An 88-amino-acid chain; its full sequence is Synaptonemal complex central element protein 3 (88 aa).

Residues 8 to 75 are a coiled coil; it reads ERSYDNMLKM…FLNCKEEMEK (68 aa).

Homodimer. Can form higher-order homooligomers. Interacts with SYCP1 (via tetrameric core); the interaction remodels SYCP1 homotetramers to 2:1 heterotrimers with SYCE3. SYCP1/SYCE3 heterotrimers form lattice assemblies as part of the mature synaptonemal complex via both lateral and head-to-head interactions. Interacts with the SYCE1-SIX6OS1 complex; the interaction recruits the SYCE1-SIX6OS1 complex to the central element of the synaptonemal complex. Interacts with the SYCE2-TEX12 complex; the interaction promotes fibrous assembly of SYCE2-TEX12 as part of the synaptonemal complex central element. Interacts with SYCE1. Interacts with SYCE2. Interacts with proteasome subunit PSMA8; to participate in meiosis progression during spermatogenesis. Interacts with SPO16. In terms of tissue distribution, expression is restricted to spermatocytes and is absent in spermatogonia, spermatids and spermatogonia (at protein level). Expressed in adult testis and embryonic ovary. Expressed in the convoluted seminiferous tubules in spermatogonia and spermatocytes.

The protein resides in the nucleus. It is found in the chromosome. Functionally, major component of the transverse central element of synaptonemal complexes (SCS), formed between homologous chromosomes during meiotic prophase. Required for the assembly of the central element of the synaptonemal complex during meiosis, via remodeling of SYCP1 lattice structures and promoting recruitment of SYCE2-TEX12 and SYCE1-SIX60S1 complexes. Required for chromosome loading of the central element-specific SCS proteins, and for initiating synapsis between homologous chromosomes. Chromosome loading appears to require SYCP1. Required for fertility and normal testis development. May play a role in apoptosis of spermatogenic cells and pathogenesis of cryptorchidism. This is Synaptonemal complex central element protein 3 from Mus musculus (Mouse).